The chain runs to 277 residues: F420-dependent methylenetetrahydromethanopterin dehydrogenase (277 aa).

This sequence belongs to the MTD family.

The catalysed reaction is 5,10-methylenetetrahydromethanopterin + oxidized coenzyme F420-(gamma-L-Glu)(n) + 2 H(+) = 5,10-methenyl-5,6,7,8-tetrahydromethanopterin + reduced coenzyme F420-(gamma-L-Glu)(n). The protein operates within one-carbon metabolism; methanogenesis from CO(2); 5,10-methylene-5,6,7,8-tetrahydromethanopterin from 5,10-methenyl-5,6,7,8-tetrahydromethanopterin (coenzyme F420 route): step 1/1. Catalyzes the reversible reduction of methenyl-H(4)MPT(+) to methylene-H(4)MPT. This Methanococcus maripaludis (strain C7 / ATCC BAA-1331) protein is F420-dependent methylenetetrahydromethanopterin dehydrogenase.